A 367-amino-acid chain; its full sequence is Putative zinc metalloprotease mll0638 (367 aa).

His-20 lines the Zn(2+) pocket. The active site involves Glu-21. His-24 is a Zn(2+) binding site. 3 consecutive transmembrane segments (helical) span residues 108–130 (ATVVAGPLFNFLLTIVVFSVLFA), 291–313 (LGFEWLVQLVALLSVGIGFLNLL), and 343–365 (MAYRAGLLLVLCFMGFVFWNDLF). Residues 121-196 (TIVVFSVLFA…ITFVMLRDGK (76 aa)) enclose the PDZ domain.

The protein belongs to the peptidase M50B family. Zn(2+) serves as cofactor.

The protein localises to the cell inner membrane. The sequence is that of Putative zinc metalloprotease mll0638 from Mesorhizobium japonicum (strain LMG 29417 / CECT 9101 / MAFF 303099) (Mesorhizobium loti (strain MAFF 303099)).